A 399-amino-acid chain; its full sequence is Phosphoglycerate kinase (399 aa).

Substrate is bound by residues 22-24, arginine 38, 61-64, arginine 120, and arginine 153; these read DFN and HLGR. ATP is bound by residues lysine 204, glutamate 326, and 352–355; that span reads GGDT.

Belongs to the phosphoglycerate kinase family. As to quaternary structure, monomer.

Its subcellular location is the cytoplasm. It carries out the reaction (2R)-3-phosphoglycerate + ATP = (2R)-3-phospho-glyceroyl phosphate + ADP. It participates in carbohydrate degradation; glycolysis; pyruvate from D-glyceraldehyde 3-phosphate: step 2/5. This Geotalea uraniireducens (strain Rf4) (Geobacter uraniireducens) protein is Phosphoglycerate kinase.